The following is a 324-amino-acid chain: MIRTDWTMAEAWAIHALPFADLMHRAQTLHRAHFDPNAIETASLLSIKTGGCPEDCGYCSQSAHHDTGVKATKLMGTEEVLAAARRAKASGAQRFCMGAAWRSPKDRDMDKLCDMVRGVAELGLETCMTLGMLSPEQVARLKAAGLDFYNHNIDTSPEYYAQIASTRTMENRLDTVEQVRKGGIKVCCGGILGMGEAEEDRIAMLVTLATLPAHPDSVPVNLWNEIEGVPVQARAQAVDPFALVRIVALARILMPASVVRLSAGRTGMSDELQALCFLAGANSIFVGDQLLTTGNPAAWKDQDLLSRLGMHIAPAQARPRVAAE.

The Radical SAM core domain maps to 37–256 (NAIETASLLS…VALARILMPA (220 aa)). Residues C52, C56, and C59 each contribute to the [4Fe-4S] cluster site. 4 residues coordinate [2Fe-2S] cluster: C96, C127, C187, and R260.

The protein belongs to the radical SAM superfamily. Biotin synthase family. In terms of assembly, homodimer. The cofactor is [4Fe-4S] cluster. [2Fe-2S] cluster is required as a cofactor.

It catalyses the reaction (4R,5S)-dethiobiotin + (sulfur carrier)-SH + 2 reduced [2Fe-2S]-[ferredoxin] + 2 S-adenosyl-L-methionine = (sulfur carrier)-H + biotin + 2 5'-deoxyadenosine + 2 L-methionine + 2 oxidized [2Fe-2S]-[ferredoxin]. It participates in cofactor biosynthesis; biotin biosynthesis; biotin from 7,8-diaminononanoate: step 2/2. Functionally, catalyzes the conversion of dethiobiotin (DTB) to biotin by the insertion of a sulfur atom into dethiobiotin via a radical-based mechanism. The sequence is that of Biotin synthase 1 from Paracoccus denitrificans (strain Pd 1222).